The following is a 263-amino-acid chain: Methylesterase 2 (263 aa).

Ser-85 acts as the Acyl-ester intermediate in catalysis. Catalysis depends on charge relay system residues Asp-213 and His-241.

Belongs to the AB hydrolase superfamily. Methylesterase family.

It catalyses the reaction methyl (indol-3-yl)acetate + H2O = (indol-3-yl)acetate + methanol + H(+). The enzyme catalyses methyl (-)-jasmonate + H2O = jasmonate + methanol + H(+). The catalysed reaction is methyl salicylate + H2O = salicylate + methanol + H(+). The protein operates within plant hormone biosynthesis. Its pathway is lipid metabolism; oxylipin biosynthesis. Its activity is regulated as follows. Esterase activity is down-regulated by salicylic acid (SA). Down-regulated by agrochemicals Paraoxon, 3,4-DCl and Profenofos. Methylesterase shown to have carboxylesterase activity, methyl indole-3-acetic acid (MeIAA) esterase activity, methyl salicylate (MeSA) esterase activity and methyl jasmonate (MeJA) esterase activity in vitro. In Arabidopsis thaliana (Mouse-ear cress), this protein is Methylesterase 2.